A 337-amino-acid chain; its full sequence is DNA-directed RNA polymerase subunit alpha (337 aa).

Positions 1-226 (MLIAQRPTLT…ELFGLARELN (226 aa)) are alpha N-terminal domain (alpha-NTD). The tract at residues 243-337 (LAADLALEIE…DTSFAEDEQL (95 aa)) is alpha C-terminal domain (alpha-CTD). Positions 315–337 (FDPSAVVNDFEDDDTSFAEDEQL) are disordered. Residues 323 to 337 (DFEDDDTSFAEDEQL) are compositionally biased toward acidic residues.

This sequence belongs to the RNA polymerase alpha chain family. As to quaternary structure, homodimer. The RNAP catalytic core consists of 2 alpha, 1 beta, 1 beta' and 1 omega subunit. When a sigma factor is associated with the core the holoenzyme is formed, which can initiate transcription.

It catalyses the reaction RNA(n) + a ribonucleoside 5'-triphosphate = RNA(n+1) + diphosphate. In terms of biological role, DNA-dependent RNA polymerase catalyzes the transcription of DNA into RNA using the four ribonucleoside triphosphates as substrates. The protein is DNA-directed RNA polymerase subunit alpha of Kineococcus radiotolerans (strain ATCC BAA-149 / DSM 14245 / SRS30216).